A 263-amino-acid polypeptide reads, in one-letter code: Taurine import ATP-binding protein TauB (263 aa).

Residues 4-235 (LTAEAISLSF…RYAAGETVRS (232 aa)) enclose the ABC transporter domain. 40-47 (GPSGCGKS) provides a ligand contact to ATP.

The protein belongs to the ABC transporter superfamily. Taurine importer (TC 3.A.1.17.1) family. In terms of assembly, the complex is composed of two ATP-binding proteins (TauB), two transmembrane proteins (TauC) and a solute-binding protein (TauA).

Its subcellular location is the cell inner membrane. The catalysed reaction is taurine(out) + ATP + H2O = taurine(in) + ADP + phosphate + H(+). Functionally, part of the ABC transporter complex TauABC involved in taurine import. Responsible for energy coupling to the transport system. This is Taurine import ATP-binding protein TauB from Pseudomonas aeruginosa (strain ATCC 15692 / DSM 22644 / CIP 104116 / JCM 14847 / LMG 12228 / 1C / PRS 101 / PAO1).